We begin with the raw amino-acid sequence, 314 residues long: 3'-5' exoribonuclease YhaM (314 aa).

Residues 163-279 (HVVSMLDLAK…LHYIDNLDAK (117 aa)) enclose the HD domain.

Belongs to the YhaM family.

In terms of biological role, shows a 3'-5' exoribonuclease activity. This Bacillus cereus (strain 03BB102) protein is 3'-5' exoribonuclease YhaM.